A 107-amino-acid chain; its full sequence is Large ribosomal subunit protein P2 (107 aa).

Residues 63-83 (SSVPSGGSAPAAAAPSGGAAP) show a composition bias toward low complexity. Residues 63-107 (SSVPSGGSAPAAAAPSGGAAPKAEEKKKEEPKEESDDDMGFGLFD) form a disordered region. A compositionally biased stretch (basic and acidic residues) spans 84–93 (KAEEKKKEEP).

Belongs to the eukaryotic ribosomal protein P1/P2 family. P1 and P2 exist as dimers at the large ribosomal subunit. In terms of processing, phosphorylated.

Functionally, plays an important role in the elongation step of protein synthesis. The sequence is that of Large ribosomal subunit protein P2 from Caenorhabditis elegans.